A 507-amino-acid chain; its full sequence is Maturase K (507 aa).

It belongs to the intron maturase 2 family. MatK subfamily.

The protein resides in the plastid. Its subcellular location is the chloroplast. Functionally, usually encoded in the trnK tRNA gene intron. Probably assists in splicing its own and other chloroplast group II introns. The polypeptide is Maturase K (Ranunculus repens (Creeping buttercup)).